Reading from the N-terminus, the 201-residue chain is Peroxiredoxin prdx-2 (201 aa).

The 159-residue stretch at 10 to 168 (AFIGKPAPQF…TLRLVQAFQF (159 aa)) folds into the Thioredoxin domain. The active-site Cysteine sulfenic acid (-SOH) intermediate is the cysteine 55.

This sequence belongs to the peroxiredoxin family. AhpC/Prx1 subfamily. Monomer and homodimer; disulfide-linked. Under nonstress conditions, present in the reduced monomeric form. Forms active hyperoxidized monomers and disulfide-linked homodimers upon oxidation by hydrogen peroxide. Forms active oxidized homodimers in response to the drug metformin. In terms of processing, the enzyme can be inactivated by further oxidation of the cysteine sulfenic acid (C(P)-SOH) to sulphinic acid (C(P)-SO2H) instead of its condensation to a disulfide bond. As to expression, expressed in the gonad, neurons and intestine (at protein level). Expressed in the pharyngeal inter-neuron I4 and the sensory interneuron I2. Expressed in the intestine, pharyngeal muscle 1, vulval muscle, body wall muscle, epithelial cells e1 and e3, and neurons in the head and tail.

It localises to the cytoplasm. It catalyses the reaction a hydroperoxide + [thioredoxin]-dithiol = an alcohol + [thioredoxin]-disulfide + H2O. With respect to regulation, activated following oxidation of the conserved redox-active cysteine residue, which subsequently allows for the oxidation and activation of substrates. Its function is as follows. Thiol-specific peroxidase that catalyzes the reduction of hydrogen peroxide and organic hydroperoxides to water and alcohols, respectively. In I2 pharyngeal neurons, required for the inhibition of feeding in response to light and hydrogen peroxide. In the intestine, plays a role in protecting cells against oxidative stress by detoxifying peroxides such as hydrogen peroxide. In addition, plays a role in the recovery from oxidative stress induced by hydrogen peroxide. In its hyperoxidized form (induced by hydrogen peroxide), confers protection against heat stress. However, has a low tendency for overoxidation during the normal lifespan. Increases sensitivity to cytotoxicity caused by metalloids and heavy metals such as arsenic and cadmium by playing a role in inhibiting the expression of phase II detoxification genes such as gcs-1 in intestinal cells. In addition, in response to arsenite, promotes the secretion of the insulin ligand daf-28 into the pseudocoelom, which negatively regulates the activities of daf-16 and skn-1. Plays a role in promoting longevity. Plays a role in the mitohormetic pathway by promoting the activation of pmk-1 in response to the drug metformin. The chain is Peroxiredoxin prdx-2 from Caenorhabditis elegans.